The following is a 229-amino-acid chain: DNA repair protein RecO (229 aa).

Belongs to the RecO family.

Functionally, involved in DNA repair and RecF pathway recombination. This chain is DNA repair protein RecO, found in Pseudomonas fluorescens (strain ATCC BAA-477 / NRRL B-23932 / Pf-5).